Here is an 81-residue protein sequence, read N- to C-terminus: Small ribosomal subunit protein bS18 (81 aa).

Belongs to the bacterial ribosomal protein bS18 family. As to quaternary structure, part of the 30S ribosomal subunit. Forms a tight heterodimer with protein bS6.

In terms of biological role, binds as a heterodimer with protein bS6 to the central domain of the 16S rRNA, where it helps stabilize the platform of the 30S subunit. The sequence is that of Small ribosomal subunit protein bS18 from Lactococcus lactis subsp. cremoris (strain MG1363).